Here is a 448-residue protein sequence, read N- to C-terminus: Adenylosuccinate synthetase (448 aa).

GTP-binding positions include 22–28 (GDEGKGK) and 50–52 (GHT). Residue Asp-23 is the Proton acceptor of the active site. Mg(2+) contacts are provided by Asp-23 and Gly-50. IMP is bound by residues 23–26 (DEGK), 48–51 (NAGH), Thr-139, Arg-153, Gln-234, Thr-249, and Arg-321. His-51 functions as the Proton donor in the catalytic mechanism. 317-323 (SVTGRPR) contacts substrate. GTP-binding positions include Arg-323, 349 to 351 (KLD), and 431 to 433 (STG).

It belongs to the adenylosuccinate synthetase family. In terms of assembly, homodimer. Mg(2+) is required as a cofactor.

Its subcellular location is the cytoplasm. It carries out the reaction IMP + L-aspartate + GTP = N(6)-(1,2-dicarboxyethyl)-AMP + GDP + phosphate + 2 H(+). The protein operates within purine metabolism; AMP biosynthesis via de novo pathway; AMP from IMP: step 1/2. Functionally, plays an important role in the de novo pathway of purine nucleotide biosynthesis. Catalyzes the first committed step in the biosynthesis of AMP from IMP. This chain is Adenylosuccinate synthetase, found in Paraburkholderia phymatum (strain DSM 17167 / CIP 108236 / LMG 21445 / STM815) (Burkholderia phymatum).